A 409-amino-acid chain; its full sequence is Dihydrolipoyllysine-residue succinyltransferase component of 2-oxoglutarate dehydrogenase complex (409 aa).

The region spanning 2–77 is the Lipoyl-binding domain; that stretch reads AIEILVPDLP…VSKQLLGKIS (76 aa). N6-lipoyllysine is present on lysine 43. A compositionally biased stretch (polar residues) spans 83–107; the sequence is DVSSATLKATNEPTPSDRQNAAIEN. Residues 83–114 form a disordered region; that stretch reads DVSSATLKATNEPTPSDRQNAAIENSHNHNAD. A Peripheral subunit-binding (PSBD) domain is found at 114-151; it reads DQSPVIRRLLAEHDLQADQIQGSGVGGRLTREDIEREI. Active-site residues include histidine 380 and aspartate 384.

This sequence belongs to the 2-oxoacid dehydrogenase family. In terms of assembly, forms a 24-polypeptide structural core with octahedral symmetry. Part of the 2-oxoglutarate dehydrogenase (OGDH) complex composed of E1 (2-oxoglutarate dehydrogenase), E2 (dihydrolipoamide succinyltransferase) and E3 (dihydrolipoamide dehydrogenase); the complex contains multiple copies of the three enzymatic components (E1, E2 and E3). (R)-lipoate is required as a cofactor.

It catalyses the reaction N(6)-[(R)-dihydrolipoyl]-L-lysyl-[protein] + succinyl-CoA = N(6)-[(R)-S(8)-succinyldihydrolipoyl]-L-lysyl-[protein] + CoA. The protein operates within amino-acid degradation; L-lysine degradation via saccharopine pathway; glutaryl-CoA from L-lysine: step 6/6. In terms of biological role, E2 component of the 2-oxoglutarate dehydrogenase (OGDH) complex which catalyzes the second step in the conversion of 2-oxoglutarate to succinyl-CoA and CO(2). This Haemophilus influenzae (strain ATCC 51907 / DSM 11121 / KW20 / Rd) protein is Dihydrolipoyllysine-residue succinyltransferase component of 2-oxoglutarate dehydrogenase complex (sucB).